We begin with the raw amino-acid sequence, 153 residues long: Mitochondrial import inner membrane translocase subunit TIM14 (153 aa).

The Mitochondrial intermembrane portion of the chain corresponds to 1-43; that stretch reads MDGTGISDGSSVTGDAAAGFPAGATQAPGSKQGMDLYFDNALQ. Residues 44-66 form a helical membrane-spanning segment; the sequence is YMGEHPVLAGVGGFLALYVGAGV. The Mitochondrial matrix segment spans residues 67 to 153; the sequence is YKGVQTRLNG…FLEKKGIVRK (87 aa). The region spanning 96-153 is the J domain; sequence EALQILNLKENNLTTKKLKEVHRKIMLANHPDKGGSPYLATKINEAKDFLEKKGIVRK.

Belongs to the TIM14 family. In terms of assembly, heterodimer with PAM16. Component of the PAM complex, at least composed of mtHsp70, MGE1, TIM44, PAM16, PAM17 and PAM18.

The protein localises to the mitochondrion inner membrane. Functionally, essential component of the PAM complex, a complex required for the translocation of transit peptide-containing proteins from the inner membrane into the mitochondrial matrix in an ATP-dependent manner. In the complex, it is required to stimulate activity of mtHSP70 (SSC1). The chain is Mitochondrial import inner membrane translocase subunit TIM14 (PAM18) from Candida glabrata (strain ATCC 2001 / BCRC 20586 / JCM 3761 / NBRC 0622 / NRRL Y-65 / CBS 138) (Yeast).